The chain runs to 382 residues: Pregnancy-associated glycoprotein 1 (382 aa).

Positions 1-15 are cleaved as a signal peptide; the sequence is MKWLVLLGLVAFSEC. Positions 16-53 are cleaved as a propeptide — activation peptide; sequence IVKIPLRRVKTMRNTLSGKKMLNSFLKEHAYRLSQISF. N-linked (GlcNAc...) asparagine glycosylation is found at asparagine 57 and asparagine 74. Positions 71–379 constitute a Peptidase A1 domain; sequence YVGNITIGTP…DRGNDRIGLA (309 aa). Cysteine 102 and cysteine 110 are disulfide-bonded. N-linked (GlcNAc...) asparagine glycosylation is present at asparagine 128. Disulfide bonds link cysteine 263/cysteine 267 and cysteine 305/cysteine 339.

The protein belongs to the peptidase A1 family. As to expression, trophoblast and placental tissue. Produced specifically in the invasive binucleate cells of the placenta.

It is found in the secreted. The protein localises to the extracellular space. Functionally, has no proteolytic activity. This Ovis aries (Sheep) protein is Pregnancy-associated glycoprotein 1.